The chain runs to 494 residues: uncharacterized protein (494 aa).

VOC domains lie at 18–174 (FIDC…FINR) and 229–408 (SLDH…FGIL). Fe cation is bound by residues H232, H349, and E460.

It belongs to the 4HPPD family. Requires Fe cation as cofactor.

Functionally, may have dioxygenase activity. This is an uncharacterized protein from Dictyostelium discoideum (Social amoeba).